Here is a 1497-residue protein sequence, read N- to C-terminus: MAYSIANNHLLRKNFATIKNIIDIPNLIDIQKNSYRRFLQSDVPLDLRKNIGLEAVFRSVFPIKDFSETSSLEYVSYTLSKPKYDVEECHQRGMTYAAPMKVKVRLVIWDSGKESGVRGVKDIKEQEVYFGEIPLMTENGTFIINGTERVIVSQLHRSPGVFFDHDKGKTHSSGKVLYSARVIPYRGSWLDFEFDHKDILFVRIDRRRKMPATVLLKALGYSVEHLLNYYYKSEQIYIAAGELRKGIEPELLTMQKAVVDVADANGEVIVKANRKFTKASIKKLLDHGVTSIPTSSESIIGRYASADVVDPVTGEILLECNQELTADKLDELRQKEVTTFNLLYIDGLNVTSSFRDTLLADKISSSDEALIEIYRRLRPGDPPTLKSSLALFDNLFFNPERYDLSAVGRLKLNFKLGLKVWPDCTILNGPTMLTAAELQNAEQLIGSLLNGTRPVDLALKDRLSSDLTKSLKKLDLKQPVPERLLEQLADELNSAVANAEFFQRDLIAGLELPESFIKLMDLIEQGGYDENRRRIEGLRRNRMLLEVAYGDSVECCNRNDILEIVRYLIELKNGRGAIDDIDHLGNRRVRAVGELLENQYRIGLVRMERAIKERMSLQEVENLMPHDLINSKPVSAVVKEFFGSSQLSQFMDQTNPLSEVTHKRRLSALGPGGLTRERAGFEVRDVHPTHYGRVCPIETPEGPNIGLIASLSTYARINEHGFVETPYRLVREGQVTSEVKFFSALEEEGHAIAQANALVDQDGRFINEYVSARKSGEFVLVQRDEIELMDVAPKQLVSVAAALIPFLENDDANRALMGSNMQRQAVPLLRADSPLVGTGMERIVAKDSGVSVIARHNGVVDAVDAGRIVIKIDEEEYDETGTGVDIYNLVKFSRSNQNTCINQKPVVKVGDKVKRGDVIADGPSTDMGELALGQNIIVAFMPWGGYNFEDSILVSERLTKDDRYTSIHIEEFECVARDTKLGKEEITADIPNLGEEALKDLDESGIIRIGAEVKPGDILVGKITPKGETQLSPEEKLLRAIFGEKAGDVRDTSLTIPPGVEGTVIGAKVFSRKGNDKDARTELIEKIEEEKLRKDEQDEVRIIRDSARGKLKRLLVGKTAGAKIEDRHGVTVLAKGKKITDELLESLTMDRWATISVSDGTDVEEKVAEVLSKLNEQVELIRGVFDDKVQKLRRGDDLPPGVIKMVKVYVAIKRKLQVGDKMAGRHGNKGVVSRILPEEDMPYMDDGRPVEIVLNPLGVPSRMNVGQILETHLGWAAKGLGWKIQKMLEEHTSEENLKKFIRETYDNADFNKILDTMDREELLLVARRLSRGVPMASPVFEGAGEAKIKELLTRAGFATNGQVTLFDGRTGEPFKHKVTVGIMYVLKLHHLVDDKIHARSIGPYSLVTQQPLGGKAQFGGQRLGEMEVWAMEAYGCSYALQEFLTVKSDDVSGRTRMYEAIVKGKHTLEPGLPESFNVLIKELQSLCLDVELLEGDE.

Belongs to the RNA polymerase beta chain family. As to quaternary structure, the RNAP catalytic core consists of 2 alpha, 1 beta, 1 beta' and 1 omega subunit. When a sigma factor is associated with the core the holoenzyme is formed, which can initiate transcription.

It catalyses the reaction RNA(n) + a ribonucleoside 5'-triphosphate = RNA(n+1) + diphosphate. Functionally, DNA-dependent RNA polymerase catalyzes the transcription of DNA into RNA using the four ribonucleoside triphosphates as substrates. The polypeptide is DNA-directed RNA polymerase subunit beta (Trichlorobacter lovleyi (strain ATCC BAA-1151 / DSM 17278 / SZ) (Geobacter lovleyi)).